The chain runs to 587 residues: Proteasome-associated ATPase (587 aa).

Residues 1 to 94 (MAARDDAEAR…KEEVDRLAQP (94 aa)) are a coiled coil. Residue 276-281 (GCGKTL) coordinates ATP. Positions 586–587 (YL) are docks into pockets in the proteasome alpha-ring.

The protein belongs to the AAA ATPase family. Homohexamer. Assembles into a hexameric ring structure that caps the 20S proteasome core. Strongly interacts with the prokaryotic ubiquitin-like protein Pup through a hydrophobic interface; the interacting region of ARC lies in its N-terminal coiled-coil domain. There is one Pup binding site per ARC hexamer ring. Upon ATP-binding, the C-terminus of ARC interacts with the alpha-rings of the proteasome core, possibly by binding to the intersubunit pockets.

It functions in the pathway protein degradation; proteasomal Pup-dependent pathway. Its function is as follows. ATPase which is responsible for recognizing, binding, unfolding and translocation of pupylated proteins into the bacterial 20S proteasome core particle. May be essential for opening the gate of the 20S proteasome via an interaction with its C-terminus, thereby allowing substrate entry and access to the site of proteolysis. Thus, the C-termini of the proteasomal ATPase may function like a 'key in a lock' to induce gate opening and therefore regulate proteolysis. The chain is Proteasome-associated ATPase from Streptosporangium roseum (strain ATCC 12428 / DSM 43021 / JCM 3005 / KCTC 9067 / NCIMB 10171 / NRRL 2505 / NI 9100).